Here is a 302-residue protein sequence, read N- to C-terminus: Methionyl-tRNA formyltransferase (302 aa).

Position 108–111 (108–111 (SLLP)) interacts with (6S)-5,6,7,8-tetrahydrofolate. Residues 279–288 (KRPMEPEEFL) are compositionally biased toward basic and acidic residues. A disordered region spans residues 279–302 (KRPMEPEEFLRGFPLPEGSRAHTS).

Belongs to the Fmt family.

The enzyme catalyses L-methionyl-tRNA(fMet) + (6R)-10-formyltetrahydrofolate = N-formyl-L-methionyl-tRNA(fMet) + (6S)-5,6,7,8-tetrahydrofolate + H(+). In terms of biological role, attaches a formyl group to the free amino group of methionyl-tRNA(fMet). The formyl group appears to play a dual role in the initiator identity of N-formylmethionyl-tRNA by promoting its recognition by IF2 and preventing the misappropriation of this tRNA by the elongation apparatus. The chain is Methionyl-tRNA formyltransferase from Cereibacter sphaeroides (strain ATCC 17023 / DSM 158 / JCM 6121 / CCUG 31486 / LMG 2827 / NBRC 12203 / NCIMB 8253 / ATH 2.4.1.) (Rhodobacter sphaeroides).